The sequence spans 308 residues: Cysteine proteinase 3 (308 aa).

The N-terminal stretch at 1–13 (MFALILFVSLACA) is a signal peptide. The propeptide at 14-92 (NEVAFKQWAA…TSNVKAAVKA (79 aa)) is activation peptide. 2 disulfide bridges follow: Cys112-Cys153 and Cys146-Cys186. Cys115 is a catalytic residue. Catalysis depends on residues His251 and Asn271.

This sequence belongs to the peptidase C1 family.

It localises to the cytoplasm. Its subcellular location is the cytoplasmic vesicle. The protein localises to the phagosome. The catalysed reaction is Hydrolysis of proteins, including basement membrane collagen and azocasein. Preferential cleavage: Arg-Arg-|-Xaa in small molecule substrates including Z-Arg-Arg-|-NHMec.. Functionally, cysteine protease which may be involved in pathogenicity. This is Cysteine proteinase 3 from Entamoeba histolytica (strain ATCC 30459 / HM-1:IMSS / ABRM).